Here is a 240-residue protein sequence, read N- to C-terminus: MWKILETCSCFLVVAVLSGLGKAQPESFSGSAVTDDSTSGANKRGWSMLRLGRGLQMLRLGKRGGSLDALRSGHQVPMLRAGRGSPDTSGRLDANELYAVLSAILDEPRDQSRRQPPLPRYGRDNNGVARDLLDALASDGESSSNFDLLSSLNNGPSYFRPAPRGGRYKRSLPDAGPADYPSLEDYLVQSRQFARPYSSRAVALPRIGRFSGSPRLQAKAVPRPRIGRQESQMREAKSAE.

Positions 1–23 are cleaved as a signal peptide; that stretch reads MWKILETCSCFLVVAVLSGLGKA. The tract at residues 23–44 is disordered; the sequence is AQPESFSGSAVTDDSTSGANKR. Positions 24 to 44 are excised as a propeptide; the sequence is QPESFSGSAVTDDSTSGANKR. Polar residues predominate over residues 26–41; sequence ESFSGSAVTDDSTSGA. 2 positions are modified to leucine amide: Leu-51 and Leu-60. 2 propeptides (connecting peptide) span residues 72–81 and 84–112; these read SGHQVPMLRA and GSPDTSGRLDANELYAVLSAILDEPRDQS. Ala-81 is subject to Alanine amide. Gln-115 carries the pyrrolidone carboxylic acid modification. The residue at position 121 (Tyr-121) is a Tyrosine amide. 10 propeptides (connecting peptide) span residues 124–147, 124–148, 124–149, 124–168, 131–168, 149–168, 150–168, 151–168, 171–190, and 171–199; these read DNNGVARDLLDALASDGESSSNFD, DNNGVARDLLDALASDGESSSNFDL, DNNGVARDLLDALASDGESSSNFDLL, DNNG…GGRY, DLLDALASDGESSSNFDLLSSLNNGPSYFRPAPRGGRY, LSSLNNGPSYFRPAPRGGRY, SSLNNGPSYFRPAPRGGRY, SLNNGPSYFRPAPRGGRY, SLPDAGPADYPSLEDYLVQS, and SLPDAGPADYPSLEDYLVQSRQFARPYSS. Position 207 is an isoleucine amide (Ile-207). The propeptide occupies 210-219; the sequence is FSGSPRLQAK. The tract at residues 212–240 is disordered; the sequence is GSPRLQAKAVPRPRIGRQESQMREAKSAE. Isoleucine amide is present on Ile-226. Positions 227–240 are excised as a propeptide; sequence GRQESQMREAKSAE. The segment covering 227 to 240 has biased composition (basic and acidic residues); it reads GRQESQMREAKSAE.

Expressed in the pedal-buccal projection neurons in the pedal ganglion.

It localises to the secreted. MMG2-DPs (Myomodulin gene 2-derived peptides) bias egestive feeding programs toward ingestive ones, and modulate accessory radula closer (ARC) muscle contractions. In Aplysia californica (California sea hare), this protein is Myomodulin neuropeptides 2 (MMG2).